The primary structure comprises 468 residues: Ribulose bisphosphate carboxylase large chain (468 aa).

The residue at position 5 (K5) is an N6,N6,N6-trimethyllysine. The substrate site is built by N114 and T164. The active-site Proton acceptor is the K166. K168 provides a ligand contact to substrate. The Mg(2+) site is built by K192, D194, and E195. Residue K192 is modified to N6-carboxylysine. Residue H285 is the Proton acceptor of the active site. Positions 286, 318, and 370 each coordinate substrate.

It belongs to the RuBisCO large chain family. Type I subfamily. In terms of assembly, heterohexadecamer of 8 large chains and 8 small chains; disulfide-linked. The disulfide link is formed within the large subunit homodimers. It depends on Mg(2+) as a cofactor. Post-translationally, the disulfide bond which can form in the large chain dimeric partners within the hexadecamer appears to be associated with oxidative stress and protein turnover.

It localises to the plastid. The protein localises to the chloroplast. It catalyses the reaction 2 (2R)-3-phosphoglycerate + 2 H(+) = D-ribulose 1,5-bisphosphate + CO2 + H2O. It carries out the reaction D-ribulose 1,5-bisphosphate + O2 = 2-phosphoglycolate + (2R)-3-phosphoglycerate + 2 H(+). RuBisCO catalyzes two reactions: the carboxylation of D-ribulose 1,5-bisphosphate, the primary event in carbon dioxide fixation, as well as the oxidative fragmentation of the pentose substrate in the photorespiration process. Both reactions occur simultaneously and in competition at the same active site. This Solandra grandiflora (Chalice vine) protein is Ribulose bisphosphate carboxylase large chain.